The chain runs to 328 residues: Carbonic anhydrase-related protein 10 (328 aa).

The Alpha-carbonic anhydrase domain occupies 31–301; sequence GWWAYKEVVQ…LNNRCIRTNI (271 aa).

The protein belongs to the alpha-carbonic anhydrase family.

Functionally, does not have a catalytic activity. This Macaca fascicularis (Crab-eating macaque) protein is Carbonic anhydrase-related protein 10 (CA10).